The following is a 474-amino-acid chain: Aspartyl/glutamyl-tRNA(Asn/Gln) amidotransferase subunit B (474 aa).

Belongs to the GatB/GatE family. GatB subfamily. As to quaternary structure, heterotrimer of A, B and C subunits.

The catalysed reaction is L-glutamyl-tRNA(Gln) + L-glutamine + ATP + H2O = L-glutaminyl-tRNA(Gln) + L-glutamate + ADP + phosphate + H(+). The enzyme catalyses L-aspartyl-tRNA(Asn) + L-glutamine + ATP + H2O = L-asparaginyl-tRNA(Asn) + L-glutamate + ADP + phosphate + 2 H(+). Allows the formation of correctly charged Asn-tRNA(Asn) or Gln-tRNA(Gln) through the transamidation of misacylated Asp-tRNA(Asn) or Glu-tRNA(Gln) in organisms which lack either or both of asparaginyl-tRNA or glutaminyl-tRNA synthetases. The reaction takes place in the presence of glutamine and ATP through an activated phospho-Asp-tRNA(Asn) or phospho-Glu-tRNA(Gln). The protein is Aspartyl/glutamyl-tRNA(Asn/Gln) amidotransferase subunit B of Lactiplantibacillus plantarum (strain ATCC BAA-793 / NCIMB 8826 / WCFS1) (Lactobacillus plantarum).